Reading from the N-terminus, the 89-residue chain is Small ribosomal subunit protein bS16c (89 aa).

The protein belongs to the bacterial ribosomal protein bS16 family.

Its subcellular location is the plastid. It is found in the chloroplast. This is Small ribosomal subunit protein bS16c from Drimys granadensis.